The chain runs to 128 residues: Protein Wnt-10 (128 aa).

Disulfide bonds link Cys-3–Cys-17, Cys-5–Cys-12, Cys-74–Cys-105, Cys-90–Cys-100, and Cys-127–Cys-128. Ser-9 is lipidated: O-palmitoleoyl serine; by PORCN. The N-linked (GlcNAc...) asparagine glycan is linked to Asn-91.

The protein belongs to the Wnt family. Post-translationally, palmitoleoylation is required for efficient binding to frizzled receptors. Depalmitoleoylation leads to Wnt signaling pathway inhibition. As to expression, in embryo, in dorsal hindbrain; in adults, in brain.

It localises to the secreted. It is found in the extracellular space. The protein localises to the extracellular matrix. Its function is as follows. Ligand for members of the frizzled family of seven transmembrane receptors. Probable developmental protein. May be a signaling molecule which affects the development of discrete regions of tissues. Is likely to signal over only few cell diameters. The protein is Protein Wnt-10 (wnt10) of Xenopus laevis (African clawed frog).